A 504-amino-acid polypeptide reads, in one-letter code: Maturase K (504 aa).

It belongs to the intron maturase 2 family. MatK subfamily.

It localises to the plastid. Its subcellular location is the chloroplast. Usually encoded in the trnK tRNA gene intron. Probably assists in splicing its own and other chloroplast group II introns. This Lepidium campestre (Field pepperwort) protein is Maturase K.